A 709-amino-acid polypeptide reads, in one-letter code: Protein SOSEKI 3 (709 aa).

The tract at residues 8–101 (SSVQVLYQLS…YVLRASELFD (94 aa)) is DIX-like oligomerization domain. 5 disordered regions span residues 242-266 (LHTP…AKRM), 315-344 (RDGR…AEQS), 358-393 (GGSS…KTPC), 411-439 (PSPA…NRPS), and 506-560 (DSPT…DTKP). Residues 329 to 342 (ELREVQNEKEKEAE) are compositionally biased toward basic and acidic residues. The segment covering 417–436 (NKAHSSLDRQEIPPQEECKN) has biased composition (basic and acidic residues). Positions 529 to 544 (VKTSNSLPRVKTTTSP) are enriched in polar residues. The C2HC/C3H-type zinc-finger motif lies at 663-692 (ILQECSTCGRTFKPDSLQVHMRGCHPPQYA). Residues C667, C670, H682, and C686 each coordinate Zn(2+).

It belongs to the SOSEKI family. As to quaternary structure, homodimer. Forms long polymer filaments with other SOKs proteins polymers crucial for polar localization and biological activity. Zn(2+) serves as cofactor.

The protein localises to the cell membrane. SOSEKI proteins locally interpret global polarity cues and can influence cell division orientation to coordinate cell polarization relative to body axes. In Physcomitrium patens (Spreading-leaved earth moss), this protein is Protein SOSEKI 3.